We begin with the raw amino-acid sequence, 274 residues long: Diaminopimelate epimerase (274 aa).

Substrate is bound by residues Asn-11, Gln-44, and Asn-64. Cys-73 serves as the catalytic Proton donor. Substrate-binding positions include 74–75, Asn-157, Asn-190, and 208–209; these read GN and ER. Cys-217 functions as the Proton acceptor in the catalytic mechanism. Substrate is bound at residue 218-219; that stretch reads GS.

This sequence belongs to the diaminopimelate epimerase family. Homodimer.

The protein resides in the cytoplasm. It carries out the reaction (2S,6S)-2,6-diaminopimelate = meso-2,6-diaminopimelate. It participates in amino-acid biosynthesis; L-lysine biosynthesis via DAP pathway; DL-2,6-diaminopimelate from LL-2,6-diaminopimelate: step 1/1. Its function is as follows. Catalyzes the stereoinversion of LL-2,6-diaminopimelate (L,L-DAP) to meso-diaminopimelate (meso-DAP), a precursor of L-lysine and an essential component of the bacterial peptidoglycan. This is Diaminopimelate epimerase from Yersinia enterocolitica serotype O:8 / biotype 1B (strain NCTC 13174 / 8081).